A 165-amino-acid polypeptide reads, in one-letter code: Ribosomal RNA large subunit methyltransferase H (165 aa).

Residue Gly109 coordinates S-adenosyl-L-methionine.

Belongs to the RNA methyltransferase RlmH family. As to quaternary structure, homodimer.

It is found in the cytoplasm. The enzyme catalyses pseudouridine(1915) in 23S rRNA + S-adenosyl-L-methionine = N(3)-methylpseudouridine(1915) in 23S rRNA + S-adenosyl-L-homocysteine + H(+). Specifically methylates the pseudouridine at position 1915 (m3Psi1915) in 23S rRNA. The protein is Ribosomal RNA large subunit methyltransferase H of Methylorubrum extorquens (strain CM4 / NCIMB 13688) (Methylobacterium extorquens).